Consider the following 453-residue polypeptide: Phosphoglucosamine mutase (453 aa).

Ser105 serves as the catalytic Phosphoserine intermediate. Mg(2+) contacts are provided by Ser105, Asp244, Asp246, and Asp248. Ser105 carries the post-translational modification Phosphoserine.

It belongs to the phosphohexose mutase family. It depends on Mg(2+) as a cofactor. In terms of processing, activated by phosphorylation.

The catalysed reaction is alpha-D-glucosamine 1-phosphate = D-glucosamine 6-phosphate. In terms of biological role, catalyzes the conversion of glucosamine-6-phosphate to glucosamine-1-phosphate. This Chromohalobacter salexigens (strain ATCC BAA-138 / DSM 3043 / CIP 106854 / NCIMB 13768 / 1H11) protein is Phosphoglucosamine mutase.